We begin with the raw amino-acid sequence, 194 residues long: Endoribonuclease YbeY (194 aa).

Residues His-127, His-131, and Asp-137 each coordinate Zn(2+). The disordered stretch occupies residues 162–194 (PLSNDEDSAPEQDDSFDDDASDSSGGIMSGGVS). A compositionally biased stretch (acidic residues) spans 165–182 (NDEDSAPEQDDSFDDDAS).

This sequence belongs to the endoribonuclease YbeY family. Zn(2+) serves as cofactor.

The protein localises to the cytoplasm. Its function is as follows. Single strand-specific metallo-endoribonuclease involved in late-stage 70S ribosome quality control and in maturation of the 3' terminus of the 16S rRNA. The sequence is that of Endoribonuclease YbeY from Rhodopirellula baltica (strain DSM 10527 / NCIMB 13988 / SH1).